The primary structure comprises 63 residues: Anionic peptide NDBP7 (63 aa).

The N-terminal stretch at 1–20 (MISRFCLLFLLVFVVSKIQA) is a signal peptide.

It belongs to the non-disulfide-bridged peptide (NDBP) superfamily. Long chain multifunctional peptide (group 2) family. Expressed by the venom gland.

Its subcellular location is the secreted. This Lychas mucronatus (Chinese swimming scorpion) protein is Anionic peptide NDBP7.